The following is a 361-amino-acid chain: Septin-2 (361 aa).

Residue Tyr17 is modified to Phosphotyrosine. The region spanning 34–306 (KGFEFTLMVV…ENFRSERLKR (273 aa)) is the Septin-type G domain. The interval 44-51 (GESGLGKS) is G1 motif. Residues 44–51 (GESGLGKS), Thr78, Gly104, and 183–191 (KADTLTLKE) each bind GTP. Residues 101–104 (DTPG) form a G3 motif region. The tract at residues 182 to 185 (AKAD) is G4 motif. Lys190 carries the post-translational modification N6-acetyllysine. The residue at position 211 (Tyr211) is a Phosphotyrosine. Ser218 is modified (phosphoserine). The GTP site is built by Gly241 and Arg256. An important for dimerization region spans residues 260-270 (WGVVEVENPEH).

The protein belongs to the TRAFAC class TrmE-Era-EngA-EngB-Septin-like GTPase superfamily. Septin GTPase family. As to quaternary structure, septins polymerize into heterooligomeric protein complexes that form filaments, and associate with cellular membranes, actin filaments and microtubules. GTPase activity is required for filament formation. Filaments are assembled from asymmetrical heterotrimers, composed of SEPTIN2, SEPTIN6 and SEPTIN7 that associate head-to-head to form a hexameric unit. Interaction between SEPTIN2 and SEPTIN7 seems indirect. Interacts with SEPTIN5. Interaction with SEPTIN4 not detected. Interacts with SEPTIN9. Component of a septin core octameric complex consisting of SEPTIN12, SEPTIN7, SEPTIN6 and SEPTIN2 or SEPTIN4 in the order 12-7-6-2-2-6-7-12 or 12-7-6-4-4-6-7-12 and located in the sperm annulus. Interacts with MAP4. Interacts with DZIP1L.

Its subcellular location is the cytoplasm. It is found in the cytoskeleton. It localises to the spindle. The protein resides in the chromosome. The protein localises to the centromere. Its subcellular location is the kinetochore. It is found in the cleavage furrow. It localises to the midbody. The protein resides in the cell cortex. The protein localises to the cell projection. Its subcellular location is the cilium membrane. It is found in the cilium. It localises to the flagellum. In terms of biological role, filament-forming cytoskeletal GTPase. Forms a filamentous structure with SEPTIN12, SEPTIN6, SEPTIN2 and probably SEPTIN4 at the sperm annulus which is required for the structural integrity and motility of the sperm tail during postmeiotic differentiation. Required for normal organization of the actin cytoskeleton. Plays a role in the biogenesis of polarized columnar-shaped epithelium by maintaining polyglutamylated microtubules, thus facilitating efficient vesicle transport, and by impeding MAP4 binding to tubulin. Required for the progression through mitosis. Forms a scaffold at the midplane of the mitotic splindle required to maintain CENPE localization at kinetochores and consequently chromosome congression. During anaphase, may be required for chromosome segregation and spindle elongation. Plays a role in ciliogenesis and collective cell movements. In cilia, required for the integrity of the diffusion barrier at the base of the primary cilium that prevents diffusion of transmembrane proteins between the cilia and plasma membranes: probably acts by regulating the assembly of the tectonic-like complex (also named B9 complex) by localizing TMEM231 protein. In Bos taurus (Bovine), this protein is Septin-2.